The sequence spans 567 residues: 2-succinyl-5-enolpyruvyl-6-hydroxy-3-cyclohexene-1-carboxylate synthase (567 aa).

It belongs to the TPP enzyme family. MenD subfamily. As to quaternary structure, homodimer. The cofactor is Mg(2+). It depends on Mn(2+) as a cofactor. Thiamine diphosphate serves as cofactor.

It catalyses the reaction isochorismate + 2-oxoglutarate + H(+) = 5-enolpyruvoyl-6-hydroxy-2-succinyl-cyclohex-3-ene-1-carboxylate + CO2. It functions in the pathway quinol/quinone metabolism; 1,4-dihydroxy-2-naphthoate biosynthesis; 1,4-dihydroxy-2-naphthoate from chorismate: step 2/7. It participates in quinol/quinone metabolism; menaquinone biosynthesis. Catalyzes the thiamine diphosphate-dependent decarboxylation of 2-oxoglutarate and the subsequent addition of the resulting succinic semialdehyde-thiamine pyrophosphate anion to isochorismate to yield 2-succinyl-5-enolpyruvyl-6-hydroxy-3-cyclohexene-1-carboxylate (SEPHCHC). This chain is 2-succinyl-5-enolpyruvyl-6-hydroxy-3-cyclohexene-1-carboxylate synthase, found in Yersinia pestis bv. Antiqua (strain Angola).